The sequence spans 501 residues: Beta-secretase 1 (501 aa).

The signal sequence occupies residues 1-21; it reads MAQALPWLLLWMGSGVLPAHG. Positions 22–45 are excised as a propeptide; that stretch reads SQPGIRLPLRSGLGGAPLGLRLPR. Over 22–457 the chain is Extracellular; sequence SQPGIRLPLR…PQTDESTLMT (436 aa). Positions 39–58 are disordered; that stretch reads LGLRLPRETDEESEEPGRRG. In terms of domain architecture, Peptidase A1 spans 75 to 416; it reads YYVEMTLGSP…DRARKRIGFA (342 aa). D93 is an active-site residue. An N6-acetyllysine modification is found at K126. N153, N172, and N223 each carry an N-linked (GlcNAc...) asparagine glycan. Intrachain disulfides connect C216/C420, C278/C443, and C330/C380. N6-acetyllysine occurs at positions 275, 279, and 285. The active site involves D289. N6-acetyllysine occurs at positions 299, 300, and 307. N354 is a glycosylation site (N-linked (GlcNAc...) asparagine). A helical transmembrane segment spans residues 458–478; it reads IAYVMAAICALFMLPLCLMVC. Residues C474, C478, C482, and C485 are each lipidated (S-palmitoyl cysteine). Over 479–501 the chain is Cytoplasmic; the sequence is QWRCLRCLRHQHDDFADDISLLK. The interval 479–501 is interaction with RTN3; that stretch reads QWRCLRCLRHQHDDFADDISLLK. The short motif at 496 to 500 is the DXXLL element; it reads DISLL. Phosphoserine is present on S498. K501 participates in a covalent cross-link: Glycyl lysine isopeptide (Lys-Gly) (interchain with G-Cter in ubiquitin).

This sequence belongs to the peptidase A1 family. As to quaternary structure, monomer. Interacts (via DXXLL motif) with GGA1, GGA2 and GGA3 (via their VHS domain); the interaction highly increases when BACE1 is phosphorylated at Ser-498. Interacts with RTN1; RTN2; RTN3 and RTN4; the interaction leads to inhibition of amyloid precursor protein processing. Interacts with SNX6. Interacts with PCSK9. Interacts with NAT8 and NAT8B. Interacts with BIN1. Interacts (via extracellular domain) with ADAM10 (via extracellular domain). Interacts with SORL1; this interaction may affect binding with APP and hence reduce APP cleavage. Interacts with NRDC AND NRG1. Post-translationally, palmitoylation mediates lipid raft localization. Acetylated in the endoplasmic reticulum at Lys-126, Lys-275, Lys-279, Lys-285, Lys-299, Lys-300 and Lys-307. Acetylation by NAT8 and NAT8B is transient and deacetylation probably occurs in the Golgi. Acetylation regulates the maturation, the transport to the plasma membrane, the stability and the expression of the protein. In terms of processing, ubiquitinated at Lys-501, ubiquitination leads to lysosomal degradation. Monoubiquitinated and 'Lys-63'-linked polyubitinated. Deubiquitnated by USP8; inhibits lysosomal degradation. Post-translationally, phosphorylation at Ser-498 is required for interaction with GGA1 and retrograded transport from endosomal compartments to the trans-Golgi network. Non-phosphorylated BACE1 enters a direct recycling route to the cell surface. N-Glycosylated. Addition of a bisecting N-acetylglucosamine by MGAT3 blocks lysosomal targeting, further degradation and is required for maintaining stability under stress conditions.

The protein localises to the cell membrane. Its subcellular location is the golgi apparatus. It localises to the trans-Golgi network. It is found in the endoplasmic reticulum. The protein resides in the endosome. The protein localises to the cell surface. Its subcellular location is the cytoplasmic vesicle membrane. It localises to the membrane raft. It is found in the lysosome. The protein resides in the late endosome. The protein localises to the early endosome. Its subcellular location is the recycling endosome. It localises to the cell projection. It is found in the axon. The protein resides in the dendrite. The catalysed reaction is Broad endopeptidase specificity. Cleaves Glu-Val-Asn-Leu-|-Asp-Ala-Glu-Phe in the Swedish variant of Alzheimer's amyloid precursor protein.. With respect to regulation, inhibited by RTN3 and RTN4. In terms of biological role, responsible for the proteolytic processing of the amyloid precursor protein (APP). Cleaves at the N-terminus of the A-beta peptide sequence, between residues 671 and 672 of APP, leads to the generation and extracellular release of beta-cleaved soluble APP, and a corresponding cell-associated C-terminal fragment which is later released by gamma-secretase. Cleaves CHL1. This chain is Beta-secretase 1 (BACE1), found in Bos taurus (Bovine).